The primary structure comprises 263 residues: Small ribosomal subunit protein eS1 (263 aa).

The span at 236 to 254 shows a compositional bias: basic and acidic residues; the sequence is GDGKGGSDEPGARVDRPEG. The interval 236 to 263 is disordered; the sequence is GDGKGGSDEPGARVDRPEGYEPPVQETV.

It belongs to the eukaryotic ribosomal protein eS1 family. Component of the small ribosomal subunit. Mature ribosomes consist of a small (40S) and a large (60S) subunit. The 40S subunit contains about 33 different proteins and 1 molecule of RNA (18S). The 60S subunit contains about 49 different proteins and 3 molecules of RNA (28S, 5.8S and 5S).

It localises to the cytoplasm. In Periplaneta americana (American cockroach), this protein is Small ribosomal subunit protein eS1.